Here is a 405-residue protein sequence, read N- to C-terminus: Argininosuccinate synthase (405 aa).

Residue 11–19 (AYSGGLDTS) coordinates ATP. Position 90 (Tyr90) interacts with L-citrulline. Gly119 contributes to the ATP binding site. Residues Thr121, Asn125, and Asp126 each coordinate L-aspartate. Asn125 serves as a coordination point for L-citrulline. Positions 129, 178, 187, 263, and 275 each coordinate L-citrulline.

This sequence belongs to the argininosuccinate synthase family. Type 1 subfamily. As to quaternary structure, homotetramer.

It localises to the cytoplasm. It carries out the reaction L-citrulline + L-aspartate + ATP = 2-(N(omega)-L-arginino)succinate + AMP + diphosphate + H(+). It participates in amino-acid biosynthesis; L-arginine biosynthesis; L-arginine from L-ornithine and carbamoyl phosphate: step 2/3. In Legionella pneumophila (strain Paris), this protein is Argininosuccinate synthase.